Consider the following 383-residue polypeptide: S-adenosylmethionine synthase (383 aa).

Residue His15 coordinates ATP. Position 17 (Asp17) interacts with Mg(2+). K(+) is bound at residue Glu43. Positions 56 and 99 each coordinate L-methionine. Residues Gln99–Arg109 are flexible loop. ATP-binding positions include Asp164 to Lys166, Arg230 to Phe231, Asp239, Arg245 to Lys246, Ala262, and Lys266. Asp239 contacts L-methionine. Residue Lys270 coordinates L-methionine.

Belongs to the AdoMet synthase family. In terms of assembly, homotetramer; dimer of dimers. Requires Mg(2+) as cofactor. K(+) is required as a cofactor.

Its subcellular location is the cytoplasm. The catalysed reaction is L-methionine + ATP + H2O = S-adenosyl-L-methionine + phosphate + diphosphate. The protein operates within amino-acid biosynthesis; S-adenosyl-L-methionine biosynthesis; S-adenosyl-L-methionine from L-methionine: step 1/1. In terms of biological role, catalyzes the formation of S-adenosylmethionine (AdoMet) from methionine and ATP. The overall synthetic reaction is composed of two sequential steps, AdoMet formation and the subsequent tripolyphosphate hydrolysis which occurs prior to release of AdoMet from the enzyme. This Mannheimia succiniciproducens (strain KCTC 0769BP / MBEL55E) protein is S-adenosylmethionine synthase.